Reading from the N-terminus, the 352-residue chain is C5a anaphylatoxin chemotactic receptor 1 (352 aa).

The span at M1–I11 shows a compositional bias: polar residues. The segment at M1–P20 is disordered. The Extracellular segment spans residues M1 to D38. A glycan (N-linked (GlcNAc...) asparagine) is linked at N6. Sulfotyrosine occurs at positions 13 and 15. Residues I39 to F65 traverse the membrane as a helical segment. Over E66–T70 the chain is Cytoplasmic. Residues V71–F94 form a helical membrane-spanning segment. Residues T95–I111 lie on the Extracellular side of the membrane. Residues C110 and C189 are joined by a disulfide bond. Residues V112–A133 form a helical membrane-spanning segment. Residues D134–A154 are Cytoplasmic-facing. The chain crosses the membrane as a helical span at residues W155–F175. Over R176–K202 the chain is Extracellular. A helical membrane pass occupies residues A203–L228. Topologically, residues I229–K244 are cytoplasmic. A helical membrane pass occupies residues V245–L267. Topologically, residues A268–N284 are extracellular. A helical membrane pass occupies residues S285–A305. The Cytoplasmic segment spans residues G306 to V352. S316, S319, S326, S329, S334, S336, and S340 each carry phosphoserine. A disordered region spans residues R332–V352. Residues F337–V352 show a composition bias toward polar residues.

Belongs to the G-protein coupled receptor 1 family. Homodimer. May also form higher-order oligomers. Interacts (when phosphorylated) with ARRB1 and ARRB2; the interaction is associated with internalization of C5aR. In terms of processing, sulfation plays a critical role in the association of C5aR with C5a, but no significant role in the ability of the receptor to transduce a signal and mobilize calcium in response to a small peptide agonist. Post-translationally, phosphorylated on serine residues in response to C5a binding, resulting in internalization of the receptor and short-term desensitization to the ligand.

It is found in the cell membrane. The protein localises to the cytoplasmic vesicle. Its function is as follows. Receptor for the chemotactic and inflammatory peptide anaphylatoxin C5a. The ligand interacts with at least two sites on the receptor: a high-affinity site on the extracellular N-terminus, and a second site in the transmembrane region which activates downstream signaling events. Receptor activation stimulates chemotaxis, granule enzyme release, intracellular calcium release and superoxide anion production. This is C5a anaphylatoxin chemotactic receptor 1 (C5ar1) from Rattus norvegicus (Rat).